The primary structure comprises 75 residues: Small ribosomal subunit protein bS18 (75 aa).

This sequence belongs to the bacterial ribosomal protein bS18 family. As to quaternary structure, part of the 30S ribosomal subunit. Forms a tight heterodimer with protein bS6.

Its function is as follows. Binds as a heterodimer with protein bS6 to the central domain of the 16S rRNA, where it helps stabilize the platform of the 30S subunit. The polypeptide is Small ribosomal subunit protein bS18 (Laribacter hongkongensis (strain HLHK9)).